The following is a 300-amino-acid chain: Bifunctional protein FolD (300 aa).

NADP(+)-binding positions include 168-170 (GRS), serine 193, and isoleucine 234.

It belongs to the tetrahydrofolate dehydrogenase/cyclohydrolase family. In terms of assembly, homodimer.

It carries out the reaction (6R)-5,10-methylene-5,6,7,8-tetrahydrofolate + NADP(+) = (6R)-5,10-methenyltetrahydrofolate + NADPH. It catalyses the reaction (6R)-5,10-methenyltetrahydrofolate + H2O = (6R)-10-formyltetrahydrofolate + H(+). Its pathway is one-carbon metabolism; tetrahydrofolate interconversion. Its function is as follows. Catalyzes the oxidation of 5,10-methylenetetrahydrofolate to 5,10-methenyltetrahydrofolate and then the hydrolysis of 5,10-methenyltetrahydrofolate to 10-formyltetrahydrofolate. The polypeptide is Bifunctional protein FolD (Ehrlichia ruminantium (strain Welgevonden)).